A 249-amino-acid chain; its full sequence is 2,3-bisphosphoglycerate-dependent phosphoglycerate mutase (249 aa).

Residues 8–15 (RHGESAWN), 21–22 (TG), R60, 87–90 (ERHY), K98, 114–115 (RR), and 183–184 (GN) each bind substrate. Residue H9 is the Tele-phosphohistidine intermediate of the active site. E87 (proton donor/acceptor) is an active-site residue.

The protein belongs to the phosphoglycerate mutase family. BPG-dependent PGAM subfamily.

The enzyme catalyses (2R)-2-phosphoglycerate = (2R)-3-phosphoglycerate. Its pathway is carbohydrate degradation; glycolysis; pyruvate from D-glyceraldehyde 3-phosphate: step 3/5. Functionally, catalyzes the interconversion of 2-phosphoglycerate and 3-phosphoglycerate. This Methanosphaerula palustris (strain ATCC BAA-1556 / DSM 19958 / E1-9c) protein is 2,3-bisphosphoglycerate-dependent phosphoglycerate mutase.